A 431-amino-acid chain; its full sequence is Adenylosuccinate synthetase (431 aa).

GTP-binding positions include 12 to 18 (GDEGKGK) and 40 to 42 (GHT). The active-site Proton acceptor is the Asp13. Mg(2+) is bound by residues Asp13 and Gly40. IMP contacts are provided by residues 13-16 (DEGK), 38-41 (NAGH), Thr130, Arg144, Gln225, Thr240, and Arg304. His41 serves as the catalytic Proton donor. 300-306 (ATTGRPR) is a substrate binding site. Residues Arg306, 332-334 (KLD), and 414-416 (SVG) contribute to the GTP site.

Belongs to the adenylosuccinate synthetase family. Homodimer. The cofactor is Mg(2+).

It localises to the cytoplasm. It catalyses the reaction IMP + L-aspartate + GTP = N(6)-(1,2-dicarboxyethyl)-AMP + GDP + phosphate + 2 H(+). Its pathway is purine metabolism; AMP biosynthesis via de novo pathway; AMP from IMP: step 1/2. Functionally, plays an important role in the de novo pathway of purine nucleotide biosynthesis. Catalyzes the first committed step in the biosynthesis of AMP from IMP. The sequence is that of Adenylosuccinate synthetase from Geotalea uraniireducens (strain Rf4) (Geobacter uraniireducens).